Reading from the N-terminus, the 657-residue chain is Probable intron-encoded endonuclease aI2 (657 aa).

Positions 1-245 (MKQMSYVTRW…TYEHLFWFFG (245 aa)) are COX1 exons 1 to 2 encoded. 6 helical membrane-spanning segments follow: residues 19-39 (IGMT…GMSV), 69-89 (LLMM…NFFL), 103-123 (LNNI…CSVL), 152-172 (AMFA…NFMV), 188-208 (PLFA…LPVL), and 269-289 (MYFI…ANMV). The tract at residues 246 to 657 (QWWPTNYVNN…KFENKWNKKF (412 aa)) is COX1 intron 2 encoded.

It in the C-terminal section; belongs to the LAGLIDADG endonuclease family. This sequence in the N-terminal section; belongs to the heme-copper respiratory oxidase family. In terms of processing, the mature protein may arise from proteolytic cleavage of an in-frame translation of COX1 exons 1 and 2 plus intron 2, containing the aI2 open reading frame.

Its subcellular location is the mitochondrion. The protein localises to the membrane. Functionally, mitochondrial DNA endonuclease involved in intron homing. The polypeptide is Probable intron-encoded endonuclease aI2 (aI2) (Debaryomyces hansenii (strain ATCC 36239 / CBS 767 / BCRC 21394 / JCM 1990 / NBRC 0083 / IGC 2968) (Yeast)).